The chain runs to 458 residues: Argininosuccinate lyase (458 aa).

Belongs to the lyase 1 family. Argininosuccinate lyase subfamily.

The protein localises to the cytoplasm. It carries out the reaction 2-(N(omega)-L-arginino)succinate = fumarate + L-arginine. It participates in amino-acid biosynthesis; L-arginine biosynthesis; L-arginine from L-ornithine and carbamoyl phosphate: step 3/3. The polypeptide is Argininosuccinate lyase (Citrifermentans bemidjiense (strain ATCC BAA-1014 / DSM 16622 / JCM 12645 / Bem) (Geobacter bemidjiensis)).